The sequence spans 447 residues: Zinc finger protein ZIC 1 (447 aa).

The C2H2-type 1; atypical zinc finger occupies 225–260 (LICKWIEPEQLANPKKSCNKTFSTMHELVTHVTVEH). The C2H2-type 2; atypical zinc-finger motif lies at 269–296 (HICFWEECPREGKPFKAKYKLVNHIRVH). 3 consecutive C2H2-type zinc fingers follow at residues 302–326 (FPCPFPGCGKVFARSENLKIHKRTH), 332–356 (FKCEFEGCDRRFANSSDRKKHMHVH), and 362–384 (YLCKMCDKSYTHPSSLRKHMKVH). Residues 375–431 (SSLRKHMKVHESSSQGSQPSPAASSGYESSTPPTIVSPSTDNPTTSSLSPSSSAVHH) are disordered. The segment covering 386 to 427 (SSSQGSQPSPAASSGYESSTPPTIVSPSTDNPTTSSLSPSSS) has biased composition (low complexity).

The protein belongs to the GLI C2H2-type zinc-finger protein family. As to quaternary structure, interacts (via the C2H2-type domains 3, 4 and 5) with MDFIC (via the C2H2-type domains 3, 4 and 5). Interacts with GLI1; the interaction enhances transcription activation. Interacts with GLI2. Interacts with GLI3; the interaction enhances transcription activation. In terms of tissue distribution, CNS. A high level expression is seen in the cerebellum. Detected in the nuclei of the cerebellar granule cell lineage from the progenitor cells of the external germinal layer to the postmigrated cells of the internal granular layer. Detected in medulloblastoma (26/29 cases), but not present in all other tumors examined.

Its subcellular location is the nucleus. The protein localises to the cytoplasm. Its function is as follows. Acts as a transcriptional activator. Involved in neurogenesis. Plays important roles in the early stage of organogenesis of the CNS, as well as during dorsal spinal cord development and maturation of the cerebellum. Involved in the spatial distribution of mossy fiber (MF) neurons within the pontine gray nucleus (PGN). Plays a role in the regulation of MF axon pathway choice. Promotes MF migration towards ipsilaterally-located cerebellar territories. May have a role in shear flow mechanotransduction in osteocytes. Retains nuclear GLI1 and GLI3 in the cytoplasm. Binds to the minimal GLI-consensus sequence 5'-TGGGTGGTC-3'. This is Zinc finger protein ZIC 1 (ZIC1) from Homo sapiens (Human).